Reading from the N-terminus, the 308-residue chain is 3'(2'),5'-bisphosphate nucleotidase 1 (308 aa).

A2 carries the post-translational modification N-acetylalanine. Residue D51 is the Proton acceptor of the active site. Mg(2+)-binding residues include E74, D117, L119, and D120. T122 serves as the catalytic Proton acceptor. T122 is modified (phosphothreonine). AMP contacts are provided by T195, H198, G220, and K224. S240 carries the phosphoserine modification. N6-succinyllysine is present on K244. D247 serves as a coordination point for Mg(2+).

The protein belongs to the inositol monophosphatase superfamily. It depends on Mg(2+) as a cofactor. Highly expressed in kidney, liver, pancreas and heart. Detected at lower levels in brain, placenta, lung and skeletal muscle.

The enzyme catalyses adenosine 3',5'-bisphosphate + H2O = AMP + phosphate. It carries out the reaction adenosine 2',5'-bisphosphate + H2O = AMP + phosphate. The catalysed reaction is 3'-phosphoadenylyl sulfate + H2O = adenosine 5'-phosphosulfate + phosphate. It catalyses the reaction 1D-myo-inositol 1,4-bisphosphate + H2O = 1D-myo-inositol 4-phosphate + phosphate. The enzyme catalyses 1D-myo-inositol 1,3,4-trisphosphate + H2O = 1D-myo-inositol 3,4-bisphosphate + phosphate. Is very sensitive to inhibition by Li(+) (IC(50)=0.3 mM for hydrolysis of PAP; IC(50)=0.6 mM for hydrolysis of inositol-1,4-bis-phosphate). Is not affected by high Na(+) concentrations. In terms of biological role, phosphatase that converts 3'(2')-phosphoadenosine 5'-phosphate (PAP) to AMP and inositol 1,4-bisphosphate (Ins(1,4)P2) to inositol 4-phosphate. Is also able to hydrolyze adenosine 3'-phosphate 5'-phosphosulfate (PAPS) to adenosine 5'-phosphosulfate (APS). Probably prevents the toxic accumulation of PAP, a compound which inhibits a variety of proteins, including PAPS-utilizing enzymes such as sulfotransferases, and RNA processing enzymes. Could also play a role in inositol recycling and phosphoinositide metabolism. Is not active on 3'-AMP, inositol-1-phosphate and inositol-1,4,5-triphosphate. In Homo sapiens (Human), this protein is 3'(2'),5'-bisphosphate nucleotidase 1 (BPNT1).